The chain runs to 418 residues: Putative ion-transport protein YfeO (418 aa).

Transmembrane regions (helical) follow at residues 10-30 (LLLS…LIVV), 54-74 (DSPF…GLVI), 99-119 (ALLG…SLGP), 120-140 (EHPI…RLLP), 149-169 (ILAS…AALI), 186-206 (LFAP…FFHP), 223-243 (ILSG…AVWC), 258-278 (VLVL…GGPV), 300-320 (DYFL…ASGF), 322-342 (GGRI…LHEH), 343-363 (VPAV…VLVV), and 371-391 (LFMA…CIVM).

It belongs to the chloride channel (TC 2.A.49) family.

Its subcellular location is the cell membrane. This Escherichia coli O17:K52:H18 (strain UMN026 / ExPEC) protein is Putative ion-transport protein YfeO.